Reading from the N-terminus, the 475-residue chain is Erythroid membrane-associated protein (475 aa).

A signal peptide spans 1–29 (MEMASSAGSWLSGCLIPLVFLRLSVHVSG). The Ig-like V-type domain occupies 30–140 (HAGDAGKFHV…GNLSKEDTVI (111 aa)). Residues 30 to 155 (HAGDAGKFHV…PSVGSLSPSA (126 aa)) are Extracellular-facing. The cysteines at positions 50 and 126 are disulfide-linked. Asparagine 132 carries an N-linked (GlcNAc...) asparagine glycan. A helical transmembrane segment spans residues 156 to 176 (VALAVILPVLVLLIMVCLCLI). Over 177–475 (WKQRRAKEKL…ALQELKAPSF (299 aa)) the chain is Cytoplasmic. The 199-residue stretch at 220–418 (KLKRAAANSG…LVICSELHKS (199 aa)) folds into the B30.2/SPRY domain. Serine 418 is subject to Phosphoserine.

This sequence belongs to the immunoglobulin superfamily. BTN/MOG family. In terms of processing, glycosylated. In terms of tissue distribution, expressed in erythroid-enriched bone marrow (at protein level). Highly expressed in bone marrow and to a lower extent in leukocytes, thymus, lymph node and spleen.

Its subcellular location is the cell membrane. It is found in the cytoplasm. In terms of biological role, possible role as a cell-adhesion or receptor molecule of erythroid cells. This Homo sapiens (Human) protein is Erythroid membrane-associated protein (ERMAP).